The sequence spans 286 residues: Small ribosomal subunit protein uS2 (286 aa).

The segment at 231–286 is disordered; the sequence is ERAQAEAKAAAGDNDAPVSSEGESTEVASDAASTASETTATSSDESAAESSEAESK. A compositionally biased stretch (low complexity) spans 255–280; that stretch reads TEVASDAASTASETTATSSDESAAES.

The protein belongs to the universal ribosomal protein uS2 family.

This chain is Small ribosomal subunit protein uS2, found in Corynebacterium kroppenstedtii (strain DSM 44385 / JCM 11950 / CIP 105744 / CCUG 35717).